Consider the following 969-residue polypeptide: Dual serine/threonine and tyrosine protein kinase (969 aa).

Residues 7–37 (QEFRRYLRNRNQLQHVLEETQQALELINLEN) adopt a coiled-coil conformation. The Protein kinase domain maps to 632–894 (PHCAEEIGRG…PLLGAIVPVL (263 aa)). ATP contacts are provided by residues 638-646 (IGRGQYGIV) and Lys662. The active-site Proton acceptor is the Asp760. The disordered stretch occupies residues 904–945 (SKSLQEVSSDKLQESSTDSRNPALALAEPYNQRGTVVSPPPT).

This sequence belongs to the protein kinase superfamily. Ser/Thr protein kinase family.

It localises to the cytoplasm. It catalyses the reaction L-seryl-[protein] + ATP = O-phospho-L-seryl-[protein] + ADP + H(+). The catalysed reaction is L-threonyl-[protein] + ATP = O-phospho-L-threonyl-[protein] + ADP + H(+). The enzyme catalyses L-tyrosyl-[protein] + ATP = O-phospho-L-tyrosyl-[protein] + ADP + H(+). In Apis mellifera (Honeybee), this protein is Dual serine/threonine and tyrosine protein kinase.